Here is a 720-residue protein sequence, read N- to C-terminus: Polyribonucleotide nucleotidyltransferase (720 aa).

Residues Asp-484 and Asp-490 each coordinate Mg(2+). In terms of domain architecture, KH spans 551 to 610; the sequence is PRMYKINIDPSKIGSVIGSGGKTIRSIIEQTNTTVDIENDGTVVIGAIDEASAKKAIKII. In terms of domain architecture, S1 motif spans 620 to 688; sequence GSIYTGKVTR…NQGRVNLSHR (69 aa). A disordered region spans residues 697–720; sequence PISRNRDSQPRRPGPFRPSDRSNS.

The protein belongs to the polyribonucleotide nucleotidyltransferase family. Requires Mg(2+) as cofactor.

The protein localises to the cytoplasm. The catalysed reaction is RNA(n+1) + phosphate = RNA(n) + a ribonucleoside 5'-diphosphate. Its function is as follows. Involved in mRNA degradation. Catalyzes the phosphorolysis of single-stranded polyribonucleotides processively in the 3'- to 5'-direction. The chain is Polyribonucleotide nucleotidyltransferase from Dehalococcoides mccartyi (strain ATCC BAA-2100 / JCM 16839 / KCTC 5957 / BAV1).